A 458-amino-acid chain; its full sequence is Adenylosuccinate synthetase (458 aa).

Residues 11–17 (GDEGKGG) and 39–41 (GHT) each bind GTP. D12 acts as the Proton acceptor in catalysis. 2 residues coordinate Mg(2+): D12 and G39. IMP is bound by residues 12–15 (DEGK), 37–40 (NAGH), T127, R141, Q232, T247, and R330. H40 functions as the Proton donor in the catalytic mechanism. 326 to 332 (TVTGRPR) is a binding site for substrate. Residues R332, 358–360 (HLD), and 443–445 (GVG) each bind GTP.

It belongs to the adenylosuccinate synthetase family. Homodimer. Requires Mg(2+) as cofactor.

The protein resides in the cytoplasm. The catalysed reaction is IMP + L-aspartate + GTP = N(6)-(1,2-dicarboxyethyl)-AMP + GDP + phosphate + 2 H(+). It participates in purine metabolism; AMP biosynthesis via de novo pathway; AMP from IMP: step 1/2. In terms of biological role, plays an important role in the de novo pathway of purine nucleotide biosynthesis. Catalyzes the first committed step in the biosynthesis of AMP from IMP. The sequence is that of Adenylosuccinate synthetase from Haloarcula marismortui (strain ATCC 43049 / DSM 3752 / JCM 8966 / VKM B-1809) (Halobacterium marismortui).